We begin with the raw amino-acid sequence, 332 residues long: Diaminopimelate epimerase (332 aa).

2 residues coordinate substrate: asparagine 13 and asparagine 73. Cysteine 82 serves as the catalytic Proton donor. Substrate contacts are provided by residues glycine 83–asparagine 84, asparagine 172, asparagine 209, and glutamate 227–arginine 228. Cysteine 236 acts as the Proton acceptor in catalysis. Glycine 237–threonine 238 provides a ligand contact to substrate.

This sequence belongs to the diaminopimelate epimerase family. In terms of assembly, homodimer.

It localises to the cytoplasm. The catalysed reaction is (2S,6S)-2,6-diaminopimelate = meso-2,6-diaminopimelate. It participates in amino-acid biosynthesis; L-lysine biosynthesis via DAP pathway; DL-2,6-diaminopimelate from LL-2,6-diaminopimelate: step 1/1. Catalyzes the stereoinversion of LL-2,6-diaminopimelate (L,L-DAP) to meso-diaminopimelate (meso-DAP), a precursor of L-lysine and an essential component of the bacterial peptidoglycan. The chain is Diaminopimelate epimerase from Lactiplantibacillus plantarum (strain ATCC BAA-793 / NCIMB 8826 / WCFS1) (Lactobacillus plantarum).